We begin with the raw amino-acid sequence, 396 residues long: 1-deoxy-D-xylulose 5-phosphate reductoisomerase (396 aa).

Thr15, Gly16, Ser17, Ile18, Gly41, and Asn129 together coordinate NADPH. Lys130 contacts 1-deoxy-D-xylulose 5-phosphate. Glu131 lines the NADPH pocket. Position 155 (Asp155) interacts with Mn(2+). Residues Ser156, Glu157, Ser182, and His205 each contribute to the 1-deoxy-D-xylulose 5-phosphate site. A Mn(2+)-binding site is contributed by Glu157. Gly211 contacts NADPH. 1-deoxy-D-xylulose 5-phosphate-binding residues include Ser218, Asn223, Lys224, and Glu227. Glu227 lines the Mn(2+) pocket.

The protein belongs to the DXR family. Requires Mg(2+) as cofactor. The cofactor is Mn(2+).

The catalysed reaction is 2-C-methyl-D-erythritol 4-phosphate + NADP(+) = 1-deoxy-D-xylulose 5-phosphate + NADPH + H(+). It functions in the pathway isoprenoid biosynthesis; isopentenyl diphosphate biosynthesis via DXP pathway; isopentenyl diphosphate from 1-deoxy-D-xylulose 5-phosphate: step 1/6. In terms of biological role, catalyzes the NADPH-dependent rearrangement and reduction of 1-deoxy-D-xylulose-5-phosphate (DXP) to 2-C-methyl-D-erythritol 4-phosphate (MEP). This Xanthomonas campestris pv. campestris (strain 8004) protein is 1-deoxy-D-xylulose 5-phosphate reductoisomerase.